The chain runs to 508 residues: Fibroblast growth factor receptor substrate 2 (508 aa).

A lipid anchor (N-myristoyl glycine) is attached at Gly-2. In terms of domain architecture, IRS-type PTB spans 13-115; the sequence is VPDNHRNKFK…QNNSINVVEE (103 aa). Residues 122-131 show a composition bias toward basic and acidic residues; that stretch reads NHQTELEVPR. The segment at 122–180 is disordered; it reads NHQTELEVPRTPRTPTTPGFAAQNLPNGYPRYPSFGDASSHPSSRHPSVGSARLPSVGE. Phosphoserine is present on Ser-177. Tyr-196 carries the post-translational modification Phosphotyrosine; by FGFR1. Disordered stretches follow at residues 200-243 and 270-297; these read TGVQ…PQIL and QLGR…ERRD. Residues Ser-211 and Ser-221 each carry the phosphoserine modification. Over residues 227–240 the composition is skewed to basic and acidic residues; it reads TPKEEPSSIEDRDP. Residues 276–286 are compositionally biased toward polar residues; that stretch reads VSGSGANNTEW. A Phosphotyrosine; by FGFR1 modification is found at Tyr-306. The segment at 315-338 is disordered; it reads PSASGVRRGRLTSTSTSDTQNINN. A compositionally biased stretch (polar residues) spans 325-338; the sequence is LTSTSTSDTQNINN. Position 349 is a phosphotyrosine; by FGFR1 (Tyr-349). Ser-365 carries the post-translational modification Phosphoserine. Residues 366–385 are disordered; the sequence is RDEDDNLGPKTPSLNGYHNN. Phosphotyrosine; by FGFR1 is present on residues Tyr-392 and Tyr-436. Residues 441-467 form a disordered region; that stretch reads LEGGSDSDNPQTPKTPTTPLPQTPTRR. Tyr-471 carries the phosphotyrosine; by FGFR1 modification. Residues 483–508 are disordered; it reads SNLQKALPRDDGTSRKTRHNSTDLPM.

In terms of assembly, part of a complex containing FRS2, GRB2, GAB1, PIK3R1 and SOS1. Part of a complex containing GRB2 and CBL. Identified in a complex containing FGFR4, NCAM1, CDH2, PLCG1, FRS2, SRC, SHC1, GAP43 and CTTN. Binds RET. Binds ALK, FGFR1, CKS2, MAPK1/ERK2, MAPK3/ERK1 and SRC. The tyrosine-phosphorylated protein binds the SH2 domains of GRB2 and PTPN11. Interacts with NTRK1, NTRK2 and NTRK3 (phosphorylated upon ligand-binding). In terms of processing, phosphorylated by ULK2 in vitro. Phosphorylated on tyrosine residues upon stimulation by NGF or FGF2. Phosphorylated on tyrosine residues by activated ALK and FGFR1. Phosphorylated on tyrosine residues upon activation of FGFR2 and FGFR3. Phosphorylated on threonine residues by MAP kinases; this inhibits tyrosine phosphorylation, and thereby down-regulates FRS2-mediated activation of MAP kinases. Ubiquitinated when tyrosine phosphorylated and in a complex with GRB2. The unphosphorylated form is not subject to ubiquitination. In terms of tissue distribution, highly expressed in heart, brain, spleen, lung, liver, skeletal muscle, kidney and testis.

It is found in the endomembrane system. Its function is as follows. Adapter protein that links activated FGR and NGF receptors to downstream signaling pathways. Plays an important role in the activation of MAP kinases and in the phosphorylation of PIK3R1, the regulatory subunit of phosphatidylinositol 3-kinase, in response to ligand-mediated activation of FGFR1. Modulates signaling via SHC1 by competing for a common binding site on NTRK1. The sequence is that of Fibroblast growth factor receptor substrate 2 (FRS2) from Homo sapiens (Human).